Reading from the N-terminus, the 219-residue chain is Large ribosomal subunit protein uL1 (219 aa).

This sequence belongs to the universal ribosomal protein uL1 family. Part of the 50S ribosomal subunit.

Binds directly to 23S rRNA. Probably involved in E site tRNA release. Functionally, protein L1 is also a translational repressor protein, it controls the translation of its operon by binding to its mRNA. In Pyrococcus horikoshii (strain ATCC 700860 / DSM 12428 / JCM 9974 / NBRC 100139 / OT-3), this protein is Large ribosomal subunit protein uL1.